The primary structure comprises 634 residues: Protein IcfG (634 aa).

In terms of domain architecture, HAMP spans 306 to 361; it reads HHSTVPILDLTKASQAIAAGDLDYEININQGNRQDEIGILGNSFIYMKNQIKTLIA. The 249-residue stretch at 385-633 folds into the PPM-type phosphatase domain; the sequence is PISLPDLQQW…DDITMIAVYR (249 aa).

In terms of biological role, involved in cross-regulation of inorganic carbon and glucose metabolisms. This chain is Protein IcfG (icfG), found in Synechocystis sp. (strain ATCC 27184 / PCC 6803 / Kazusa).